The chain runs to 24 residues: RuBisCO large subunit-binding protein subunit beta, chloroplastic (24 aa).

The protein belongs to the chaperonin (HSP60) family. Oligomer of probably six alpha and six beta subunits.

It localises to the plastid. The protein localises to the chloroplast. Its function is as follows. This protein binds RuBisCO small and large subunits and is implicated in the assembly of the enzyme oligomer. The protein is RuBisCO large subunit-binding protein subunit beta, chloroplastic of Populus euphratica (Euphrates poplar).